The primary structure comprises 37 residues: Cytochrome b6-f complex subunit 5 (37 aa).

A helical transmembrane segment spans residues 5-25 (LLSGIILGLIPVTLSGLLVAA).

This sequence belongs to the PetG family. The 4 large subunits of the cytochrome b6-f complex are cytochrome b6, subunit IV (17 kDa polypeptide, PetD), cytochrome f and the Rieske protein, while the 4 small subunits are PetG, PetL, PetM and PetN. The complex functions as a dimer.

The protein resides in the plastid. It is found in the chloroplast thylakoid membrane. Its function is as follows. Component of the cytochrome b6-f complex, which mediates electron transfer between photosystem II (PSII) and photosystem I (PSI), cyclic electron flow around PSI, and state transitions. PetG is required for either the stability or assembly of the cytochrome b6-f complex. This Porphyra purpurea (Red seaweed) protein is Cytochrome b6-f complex subunit 5.